Here is a 418-residue protein sequence, read N- to C-terminus: Serine--tRNA ligase (418 aa).

227 to 229 serves as a coordination point for L-serine; that stretch reads TSE. Residues 258-260 and Val-274 each bind ATP; that span reads RRE. Residue Glu-281 participates in L-serine binding. 345 to 348 is an ATP binding site; it reads ELTS. Thr-380 lines the L-serine pocket.

Belongs to the class-II aminoacyl-tRNA synthetase family. Type-1 seryl-tRNA synthetase subfamily. As to quaternary structure, homodimer. The tRNA molecule binds across the dimer.

It localises to the cytoplasm. The enzyme catalyses tRNA(Ser) + L-serine + ATP = L-seryl-tRNA(Ser) + AMP + diphosphate + H(+). It carries out the reaction tRNA(Sec) + L-serine + ATP = L-seryl-tRNA(Sec) + AMP + diphosphate + H(+). The protein operates within aminoacyl-tRNA biosynthesis; selenocysteinyl-tRNA(Sec) biosynthesis; L-seryl-tRNA(Sec) from L-serine and tRNA(Sec): step 1/1. In terms of biological role, catalyzes the attachment of serine to tRNA(Ser). Is also able to aminoacylate tRNA(Sec) with serine, to form the misacylated tRNA L-seryl-tRNA(Sec), which will be further converted into selenocysteinyl-tRNA(Sec). This chain is Serine--tRNA ligase, found in Rhodococcus opacus (strain B4).